The sequence spans 351 residues: Peptide chain release factor 1 (351 aa).

Residue glutamine 229 is modified to N5-methylglutamine. The tract at residues 279 to 300 (ADAERAADRKSQVGSGDRSERI) is disordered.

It belongs to the prokaryotic/mitochondrial release factor family. Methylated by PrmC. Methylation increases the termination efficiency of RF1.

The protein resides in the cytoplasm. Peptide chain release factor 1 directs the termination of translation in response to the peptide chain termination codons UAG and UAA. This Paracoccus denitrificans (strain Pd 1222) protein is Peptide chain release factor 1.